The sequence spans 485 residues: uncharacterized protein (485 aa).

The disordered stretch occupies residues 151-201 (IKAPTNNSQSGDGNGGTNNDNLLGTFDIREKSNGKKGESNGKQGNGQDKKT). Residues 155–174 (TNNSQSGDGNGGTNNDNLLG) show a composition bias toward low complexity. Residues 177–189 (DIREKSNGKKGES) show a composition bias toward basic and acidic residues.

This sequence belongs to the MG185/MG260 family.

This is an uncharacterized protein from Mycoplasma pneumoniae (strain ATCC 29342 / M129 / Subtype 1) (Mycoplasmoides pneumoniae).